Here is a 105-residue protein sequence, read N- to C-terminus: Death-associated protein 1 homolog (105 aa).

The disordered stretch occupies residues 75–105; that stretch reads AAQVAHQKPVPSAQKLPAGQHLNQHIHQPRK. A compositionally biased stretch (polar residues) spans 95–105; it reads HLNQHIHQPRK.

This sequence belongs to the DAP-DAPL1 family. As to quaternary structure, associates with ribosomes; inhibiting translation. Interacts with eiF5a (eif5a and eif5a2); inhibiting translation.

Ribosome-binding protein involved in ribosome hibernation, a process during which ribosomes are stabilized in an inactive state and preserved from proteasomal degradation. Acts via its association with eiF5a (eif5a and eif5a2) at the polypeptide exit tunnel of the ribosome, preventing mRNA translation. Involved in ribosome hibernation in the mature egg by preventing mRNA translation, leading to ribosome inactivation. Ribosomes, which are produced in large quantities during oogenesis, are stored and translationally repressed in the egg and early embryo. Compared to dap1b, binds and inactivates ribosomes less efficiently. The protein is Death-associated protein 1 homolog of Danio rerio (Zebrafish).